Reading from the N-terminus, the 231-residue chain is MAYRILVVEDDEDIGDLLEESLTRAGYEVLRAKDGKRALQLVNDSLDLVILDIMMPGISGIETCQHIRKSSNVPILFLTARSSTLDKTEGLLAGGDDYMTKPFSEEELHARVIAQLRRYTIYQEKKEQEETFLIGGKLRVSEEFNEVWKEEKQIKLSDLEYRILKLLMNKRNKIFSAQNIYESVWGQPYFYCSNNTVMVHIRKLRSKIEDDPARPVYIKTEWGRGYRFGAS.

A Response regulatory domain is found at 4-116 (RILVVEDDED…ELHARVIAQL (113 aa)). Residue aspartate 52 is modified to 4-aspartylphosphate. The ompR/PhoB-type DNA-binding region spans 129–230 (EETFLIGGKL…EWGRGYRFGA (102 aa)).

Post-translationally, phosphorylated by YrkQ.

The protein resides in the cytoplasm. Member of the two-component regulatory system YrkQ/YrkP. This is an uncharacterized protein from Bacillus subtilis (strain 168).